Here is a 490-residue protein sequence, read N- to C-terminus: Cis-aconitate decarboxylase (490 aa).

Belongs to the PrpD family. In terms of assembly, homodimer.

The protein resides in the mitochondrion. The enzyme catalyses cis-aconitate + H(+) = itaconate + CO2. Its function is as follows. Involved in the production of itaconic acid, a soluble unsaturated dicarboxylic acid mainly produced from sugars. The chain is Cis-aconitate decarboxylase (cad1) from Aspergillus terreus (strain NIH 2624 / FGSC A1156).